Here is a 281-residue protein sequence, read N- to C-terminus: NADPH-dependent 7-cyano-7-deazaguanine reductase (281 aa).

A substrate-binding site is contributed by 87 to 89 (IES). Residue 89-90 (SK) participates in NADPH binding. Cys-188 (thioimide intermediate) is an active-site residue. The active-site Proton donor is the Asp-195. 227-228 (HE) contacts substrate. Residue 256–257 (RG) participates in NADPH binding. Residues 261–281 (INPYRSTEQAKPDHNHRMARQ) are disordered. A compositionally biased stretch (basic and acidic residues) spans 268–281 (EQAKPDHNHRMARQ).

This sequence belongs to the GTP cyclohydrolase I family. QueF type 2 subfamily. As to quaternary structure, homodimer.

It localises to the cytoplasm. It catalyses the reaction 7-aminomethyl-7-carbaguanine + 2 NADP(+) = 7-cyano-7-deazaguanine + 2 NADPH + 3 H(+). Its pathway is tRNA modification; tRNA-queuosine biosynthesis. Catalyzes the NADPH-dependent reduction of 7-cyano-7-deazaguanine (preQ0) to 7-aminomethyl-7-deazaguanine (preQ1). This chain is NADPH-dependent 7-cyano-7-deazaguanine reductase, found in Vibrio vulnificus (strain CMCP6).